The following is a 142-amino-acid chain: Nucleoside diphosphate kinase (142 aa).

Residues Lys9, Phe57, Arg85, Thr91, Arg102, and Asn112 each contribute to the ATP site. The segment at 87-106 is disordered; it reads AMGATDPAKSEKGTVRGDLG. The active-site Pros-phosphohistidine intermediate is the His115.

Belongs to the NDK family. As to quaternary structure, homotetramer. Mg(2+) is required as a cofactor.

The protein resides in the cytoplasm. It carries out the reaction a 2'-deoxyribonucleoside 5'-diphosphate + ATP = a 2'-deoxyribonucleoside 5'-triphosphate + ADP. The catalysed reaction is a ribonucleoside 5'-diphosphate + ATP = a ribonucleoside 5'-triphosphate + ADP. Functionally, major role in the synthesis of nucleoside triphosphates other than ATP. The ATP gamma phosphate is transferred to the NDP beta phosphate via a ping-pong mechanism, using a phosphorylated active-site intermediate. The protein is Nucleoside diphosphate kinase of Dehalococcoides mccartyi (strain ATCC BAA-2266 / KCTC 15142 / 195) (Dehalococcoides ethenogenes (strain 195)).